Here is a 61-residue protein sequence, read N- to C-terminus: uncharacterized protein (61 aa).

A coiled-coil region spans residues 24–60 (WMRYESERDEKLRMLERMRDELEAELEEIKREIERLR).

This is an uncharacterized protein from Archaeoglobus fulgidus (strain ATCC 49558 / DSM 4304 / JCM 9628 / NBRC 100126 / VC-16).